Here is a 389-residue protein sequence, read N- to C-terminus: Innexin-6 (389 aa).

Transmembrane regions (helical) follow at residues 36–56, 111–131, 190–210, and 276–296; these read VVILAVSSALLLSSHFIGDPI, VFALQAFLFYIPRFIWKAMIA, LFYTLSTVWQAVNAWIQFYIL, and LFIFLWFWLVFVAVVSTVNCF.

It belongs to the pannexin family.

It is found in the cell membrane. Its subcellular location is the cell junction. The protein resides in the gap junction. Functionally, structural component of the gap junctions. This Caenorhabditis elegans protein is Innexin-6 (inx-6).